A 148-amino-acid chain; its full sequence is Receptor activity-modifying protein 1 (148 aa).

Residues 1–26 form the signal peptide; it reads MARALCRLPRRGLWLLLAHHLFMTTA. 3 disulfide bridges follow: C27/C82, C40/C72, and C57/C104. Residues 27–118 are Extracellular-facing; that stretch reads CQEANYGALL…RAVRDPPGSI (92 aa). The helical transmembrane segment at 119 to 140 threads the bilayer; sequence LYPFIVVPITVTLLVTALVVWQ. Topologically, residues 141-148 are cytoplasmic; it reads SKRTEGIV.

It belongs to the RAMP family. Heterodimer of CALCRL and RAMP1; the interaction induces allosteric modulation of CALCRL function and CGRP1/CALCA and CGRP2/CALCB ligand specificity. Heterodimer of CALCR and RAMP1; interaction forms the AMYR1 receptor complex for amylin/IAPP and CGRP1/CALCA ligands. Expressed in many tissues including the uterus, bladder, brain, pancreas and gastro-intestinal tract.

The protein resides in the cell membrane. Accessory protein that interacts with and modulates the function of G-protein coupled receptors including calcitonin gene-related peptide type 1 receptor (CALCRL) and calcitonin receptor (CALCR). Required for the transport of CALCRL to the plasma membrane. Together with CALCRL, form the receptor complex for the calcitonin gene-related peptides CGRP1/CALCA and CGRP2/CALCB. Together with CALCR, form the AMYR1 receptor complex for amylin/IAPP and CGRP1/CALCA. This chain is Receptor activity-modifying protein 1, found in Homo sapiens (Human).